Consider the following 378-residue polypeptide: Ribosomal RNA large subunit methyltransferase G (378 aa).

Belongs to the methyltransferase superfamily. RlmG family.

It localises to the cytoplasm. It carries out the reaction guanosine(1835) in 23S rRNA + S-adenosyl-L-methionine = N(2)-methylguanosine(1835) in 23S rRNA + S-adenosyl-L-homocysteine + H(+). Its function is as follows. Specifically methylates the guanine in position 1835 (m2G1835) of 23S rRNA. The polypeptide is Ribosomal RNA large subunit methyltransferase G (Salmonella paratyphi B (strain ATCC BAA-1250 / SPB7)).